The sequence spans 495 residues: Putative aldehyde dehydrogenase AldA (495 aa).

Residue 212–218 (GKGSESG) participates in NAD(+) binding. Active-site residues include Glu256 and Cys290.

This sequence belongs to the aldehyde dehydrogenase family.

The enzyme catalyses an aldehyde + NAD(+) + H2O = a carboxylate + NADH + 2 H(+). In Staphylococcus aureus (strain bovine RF122 / ET3-1), this protein is Putative aldehyde dehydrogenase AldA (aldA).